Consider the following 64-residue polypeptide: Sec-independent protein translocase protein TatA (64 aa).

Residues 10-30 traverse the membrane as a helical segment; the sequence is LVLILGIALIIFGPGKLPELG.

This sequence belongs to the TatA/E family. As to quaternary structure, forms a complex with TatC.

It is found in the cell membrane. Functionally, part of the twin-arginine translocation (Tat) system that transports large folded proteins containing a characteristic twin-arginine motif in their signal peptide across membranes. TatA could form the protein-conducting channel of the Tat system. The sequence is that of Sec-independent protein translocase protein TatA from Alkaliphilus oremlandii (strain OhILAs) (Clostridium oremlandii (strain OhILAs)).